The chain runs to 111 residues: MFKATARYIRVQPRKARLAAGLMRNLSVTEAQQQLSFSQLKAGRCLKKVLDSAVANAELHDNVKREKLNVIEVRVDAGPVYKRAKSKSRGGRSPILKRTSHLTVIVGEKER.

Belongs to the universal ribosomal protein uL22 family. Part of the 50S ribosomal subunit.

Functionally, this protein binds specifically to 23S rRNA; its binding is stimulated by other ribosomal proteins, e.g. L4, L17, and L20. It is important during the early stages of 50S assembly. It makes multiple contacts with different domains of the 23S rRNA in the assembled 50S subunit and ribosome. In terms of biological role, the globular domain of the protein is located near the polypeptide exit tunnel on the outside of the subunit, while an extended beta-hairpin is found that lines the wall of the exit tunnel in the center of the 70S ribosome. The sequence is that of Large ribosomal subunit protein uL22 from Chlamydia abortus (strain DSM 27085 / S26/3) (Chlamydophila abortus).